The chain runs to 272 residues: Protein SSO0103 (272 aa).

It belongs to the CinA family.

This is Protein SSO0103 from Saccharolobus solfataricus (strain ATCC 35092 / DSM 1617 / JCM 11322 / P2) (Sulfolobus solfataricus).